A 338-amino-acid chain; its full sequence is Microtubule-associated protein RP/EB family member 2 (338 aa).

The segment at 1 to 21 (MPGPTQALSPNGENNNDIIQD) is disordered. Residues 57-159 (TMSRHDIIAW…FIQWFKKFFD (103 aa)) form the Calponin-homology (CH) domain. Disordered regions lie at residues 171 to 241 (EARQ…KDLE) and 300 to 338 (SEEHESHTEEHEGEEQVHEQPSSRRSTDSRSVSDNFHFV). Residues 200-234 (SPTAGAAKSSPASKPGSTPSRPSSAKKAAPSSSAS) show a composition bias toward low complexity. The EB1 C-terminal domain occupies 236–306 (SDKDLETQVI…LYASEEHESH (71 aa)). Basic and acidic residues predominate over residues 300–327 (SEEHESHTEEHEGEEQVHEQPSSRRSTD). Over residues 328 to 338 (SRSVSDNFHFV) the composition is skewed to low complexity.

It belongs to the MAPRE family.

It is found in the cytoplasm. The protein localises to the cytoskeleton. Its function is as follows. May be involved in microtubule polymerization, and spindle function by stabilizing microtubules and anchoring them at centrosomes. This Gallus gallus (Chicken) protein is Microtubule-associated protein RP/EB family member 2 (MAPRE2).